A 274-amino-acid chain; its full sequence is Large ribosomal subunit protein uL2 (274 aa).

The tract at residues Asn197 to Lys274 is disordered. Composition is skewed to basic residues over residues Lys207–Asn220 and Pro244–Lys274.

Belongs to the universal ribosomal protein uL2 family. In terms of assembly, part of the 50S ribosomal subunit. Forms a bridge to the 30S subunit in the 70S ribosome.

Its function is as follows. One of the primary rRNA binding proteins. Required for association of the 30S and 50S subunits to form the 70S ribosome, for tRNA binding and peptide bond formation. It has been suggested to have peptidyltransferase activity; this is somewhat controversial. Makes several contacts with the 16S rRNA in the 70S ribosome. In Porphyromonas gingivalis (strain ATCC BAA-308 / W83), this protein is Large ribosomal subunit protein uL2.